Reading from the N-terminus, the 172-residue chain is Adenine phosphoribosyltransferase (172 aa).

The protein belongs to the purine/pyrimidine phosphoribosyltransferase family. Homodimer.

It localises to the cytoplasm. It carries out the reaction AMP + diphosphate = 5-phospho-alpha-D-ribose 1-diphosphate + adenine. It functions in the pathway purine metabolism; AMP biosynthesis via salvage pathway; AMP from adenine: step 1/1. Catalyzes a salvage reaction resulting in the formation of AMP, that is energically less costly than de novo synthesis. The chain is Adenine phosphoribosyltransferase from Synechococcus sp. (strain CC9311).